The chain runs to 162 residues: MDPTMPTPHTISGTSPFPRNSSTAAEMIVTEQEHLQPRHRRSRKRDRPPPTPPSGNIKAAPAPLPEGGGHGHEEEARDEDVDRFYALLDEVREMRELWRRNGDCVATKRTSVDGGQKKQDRQQLWRPTFVMEDFAFELKGSQVVQPEKKVDSAPNLDLSLSM.

The interval 1–80 (MDPTMPTPHT…GHEEEARDED (80 aa)) is disordered. Residues 7–24 (TPHTISGTSPFPRNSSTA) are compositionally biased toward polar residues. The segment covering 37-46 (PRHRRSRKRD) has biased composition (basic residues). The segment covering 69–80 (GHGHEEEARDED) has biased composition (basic and acidic residues).

It belongs to the NPR1-interactor family. As to quaternary structure, interacts with NPR1/NH1. Interacts with NPR3/NH3.

Its subcellular location is the nucleus. Functionally, binds to and represses NPR1/NH1-mediated transcriptional activation of LG2 in vitro. This is NRR repressor homolog 3 from Oryza sativa subsp. japonica (Rice).